The chain runs to 392 residues: Gastricsin (392 aa).

A signal peptide spans 1–16; that stretch reads MKWMVVALLCLPLLEA. A propeptide spans 17 to 62 (activation peptide); sequence ALIRVPLKKMKSIRETMKEQGVLKDFLKNHKYDPGQKYHFGKFGDY. One can recognise a Peptidase A1 domain in the interval 76 to 389; sequence YYGEISIGTP…DMGNNRVGLA (314 aa). Residue Asp94 is part of the active site. 2 disulfides stabilise this stretch: Cys107–Cys112 and Cys270–Cys275. The active site involves Asp280. Cys314 and Cys347 are joined by a disulfide.

The protein belongs to the peptidase A1 family.

Its subcellular location is the secreted. It catalyses the reaction More restricted specificity than pepsin A, but shows preferential cleavage at Tyr-|-Xaa bonds. High activity on hemoglobin.. In terms of biological role, hydrolyzes a variety of proteins. The protein is Gastricsin (Pgc) of Mus musculus (Mouse).